A 1246-amino-acid chain; its full sequence is Superkiller complex protein 2 (1246 aa).

Residues 220-246 (LGGGDEDENEAVGQPGGPRGDTVSASP) form a disordered region. Phosphoserine occurs at positions 245 and 256. The region spanning 319–475 (ILHLERHDSV…WIGRLKRRQI (157 aa)) is the Helicase ATP-binding domain. 332–339 (AHTSAGKT) is a binding site for ATP. The DEVH box motif lies at 423–426 (DEVH). Residues 585 to 755 (GLTSLDLTTS…LTYTMILNLL (171 aa)) form the Helicase C-terminal domain.

Belongs to the helicase family. SKI2 subfamily. Component of the SKI complex which consists of SKIC2, SKIC3 and SKIC8. Interacts with HBS1L isoform 2.

The protein localises to the nucleus. The protein resides in the cytoplasm. The enzyme catalyses ATP + H2O = ADP + phosphate + H(+). Its function is as follows. Helicase component of the SKI complex, a multiprotein complex that assists the RNA-degrading exosome during the mRNA decay and quality-control pathways. The SKI complex catalyzes mRNA extraction from 80S ribosomal complexes in the 3'-5' direction and channels mRNA to the cytosolic exosome for degradation. SKI-mediated extraction of mRNA from stalled ribosomes allow binding of the Pelota-HBS1L complex and subsequent ribosome disassembly by ABCE1 for ribosome recycling. In the nucleus, the SKI complex associates with transcriptionally active genes in a manner dependent on PAF1 complex (PAF1C). In Homo sapiens (Human), this protein is Superkiller complex protein 2.